Reading from the N-terminus, the 123-residue chain is NADH dehydrogenase [ubiquinone] 1 beta subcomplex subunit 7 (123 aa).

Residues M1–G32 are disordered. In terms of domain architecture, CHCH spans R59–R102. Short sequence motifs (cx9C motif) lie at residues C62–C72 and C84–C94. 2 cysteine pairs are disulfide-bonded: C62-C94 and C72-C84.

The protein belongs to the complex I NDUFB7 subunit family. Complex I is composed of 45 different subunits.

It is found in the mitochondrion. The protein resides in the mitochondrion inner membrane. The protein localises to the mitochondrion intermembrane space. Its function is as follows. Accessory subunit of the mitochondrial membrane respiratory chain NADH dehydrogenase (Complex I), that is believed not to be involved in catalysis. Complex I functions in the transfer of electrons from NADH to the respiratory chain. The immediate electron acceptor for the enzyme is believed to be ubiquinone. In Caenorhabditis elegans, this protein is NADH dehydrogenase [ubiquinone] 1 beta subcomplex subunit 7.